A 416-amino-acid polypeptide reads, in one-letter code: Cyclin-L1-1 (416 aa).

The segment at 286–416 (KCTAGSANND…DSSKDRRRHH (131 aa)) is disordered. 4 stretches are compositionally biased toward basic and acidic residues: residues 304–315 (PHEKATDSKKSG), 328–374 (SYER…DKLK), 384–393 (RLKDSGGHSD), and 401–410 (RDRDYRDSSK).

This sequence belongs to the cyclin family. Cyclin L subfamily. In terms of assembly, forms a complex with CDKG1. Interacts with MOS4 and associates with the spliceosome.

It is found in the nucleus. In terms of biological role, cognate cyclin for CDKG1. Required for synapsis and male meiosis, and for the proper splicing of specific resistance (R) genes. Involved in regulation of DNA methylation and transcriptional silencing. The polypeptide is Cyclin-L1-1 (CYCL1-1) (Arabidopsis thaliana (Mouse-ear cress)).